The chain runs to 685 residues: Multicopper oxidase VdtB (685 aa).

The signal sequence occupies residues methionine 1–glycine 17. Plastocyanin-like domains lie at leucine 26–lysine 139 and isoleucine 168–asparagine 368. Asparagine 71 carries N-linked (GlcNAc...) asparagine glycosylation. Cu cation-binding residues include histidine 75, histidine 77, histidine 119, and histidine 121. Asparagine 178, asparagine 229, asparagine 253, asparagine 432, and asparagine 475 each carry an N-linked (GlcNAc...) asparagine glycan. The Plastocyanin-like 3 domain maps to aspartate 466 to aspartate 585. Residue histidine 500 coordinates Cu cation. N-linked (GlcNAc...) asparagine glycosylation occurs at asparagine 517. Residues serine 627–tryptophan 647 traverse the membrane as a helical segment.

It belongs to the multicopper oxidase family.

Its subcellular location is the membrane. It catalyses the reaction 4 semiviriditoxin + O2 = 2 (M)-viriditoxin + 2 H2O. Its pathway is secondary metabolite biosynthesis. Functionally, multicopper oxidase; part of the gene cluster that mediates the biosynthesis of viriditoxin, one of the 'classical' secondary metabolites produced by fungi and that has antibacterial activity. The first step is performed by the polyketide synthase VdtA which condenses one acetyl-CoA and 6 malonyl-CoA units to form the heptaketide monomer backbone of viriditoxin. The product of VdtA is then O-methylated on C7 by the O-methyltransferase VdtC. The O-methyl group is important for the stereoselective coupling of the monomers at the final step of viriditoxin biosynthesis. The short-chain dehydrogenase/reductase VdtF then acts as a stereospecific reductase converting the pyrone to dihydropyrone via the reduction of the C3-C4 double bond. The FAD-binding monooxygenase VdtE then converts the ketone group into a methyl-ester group to yield semi-viriditoxin. Finally, the laccase VdtB is involved in dimerization of 2 semi-viriditoxin molecules to yield the final viriditoxin. VdtB is responsible for the regioselective 6,6'-coupling of semi-viriditoxin, which yields (M)-viriditoxin and (P)-viriditoxin at a ratio of 1:2. The non-catalytic carboxylesterase-like protein VdtD affects the stereochemistical outcome of the coupling. The highly reducing polyketide synthase VdtX is not involved in viriditoxin synthesis, but might possibly play a role in the production of additional metabolites not identified yet. This chain is Multicopper oxidase VdtB, found in Byssochlamys spectabilis (Paecilomyces variotii).